Consider the following 244-residue polypeptide: DNA repair protein RecO (244 aa).

This sequence belongs to the RecO family.

Its function is as follows. Involved in DNA repair and RecF pathway recombination. The protein is DNA repair protein RecO of Polynucleobacter asymbioticus (strain DSM 18221 / CIP 109841 / QLW-P1DMWA-1) (Polynucleobacter necessarius subsp. asymbioticus).